The primary structure comprises 286 residues: uncharacterized protein (286 aa).

A helical membrane pass occupies residues 8–28 (PLSGFISSLIWWLLFFYLIMA).

To M.jannaschii MJ1495.

The protein localises to the membrane. This is an uncharacterized protein from Methanocaldococcus jannaschii (strain ATCC 43067 / DSM 2661 / JAL-1 / JCM 10045 / NBRC 100440) (Methanococcus jannaschii).